The sequence spans 903 residues: Translation initiation factor IF-2 (903 aa).

Disordered regions lie at residues 57–171 (EKFK…QRRR) and 267–318 (PTPQ…EAVT). The span at 69 to 163 (KKEAKEPSEK…SEPQKPKESL (95 aa)) shows a compositional bias: basic and acidic residues. Over residues 267–278 (PTPQPMQKTKQP) the composition is skewed to low complexity. Over residues 299 to 308 (RRARKKHKKP) the composition is skewed to basic residues. The tr-type G domain occupies 402 to 569 (PRAPVITIMG…IVLLQAEILE (168 aa)). The G1 stretch occupies residues 411–418 (GHVDHGKT). 411–418 (GHVDHGKT) contacts GTP. The interval 436–440 (GITQH) is G2. A G3 region spans residues 457–460 (DTPG). GTP-binding positions include 457–461 (DTPGH) and 511–514 (NKMD). A G4 region spans residues 511 to 514 (NKMD). The segment at 547 to 549 (SAK) is G5.

It belongs to the TRAFAC class translation factor GTPase superfamily. Classic translation factor GTPase family. IF-2 subfamily.

It is found in the cytoplasm. Its function is as follows. One of the essential components for the initiation of protein synthesis. Protects formylmethionyl-tRNA from spontaneous hydrolysis and promotes its binding to the 30S ribosomal subunits. Also involved in the hydrolysis of GTP during the formation of the 70S ribosomal complex. The sequence is that of Translation initiation factor IF-2 from Campylobacter curvus (strain 525.92).